The chain runs to 423 residues: Ferrochelatase, mitochondrial (423 aa).

The transit peptide at 1–54 (MRSLGANMAAALRAAGVLLRDPLASSSWRVCQPWRWKSGAAAAAVTTETAQHAQ) directs the protein to the mitochondrion. Lys-57 is subject to N6-acetyllysine. Residues Arg-115, Tyr-123, and Ser-130 each coordinate protoporphyrin IX. Lys-138 bears the N6-succinyllysine mark. [2Fe-2S] cluster is bound at residue Cys-196. Active-site residues include His-230 and Asp-383. Residues Cys-403, Cys-406, and Cys-411 each contribute to the [2Fe-2S] cluster site. At Lys-415 the chain carries N6-acetyllysine; alternate. Lys-415 carries the post-translational modification N6-succinyllysine; alternate.

This sequence belongs to the ferrochelatase family. As to quaternary structure, homodimer. Homotetramer. Interacts with PGRMC1; the interaction results in decreased FECH activity. Interacts with ABCB10 and SLC25A37; this interaction forms an oligomeric complex. Forms a complex with ABCB7 and ABCB10, where a dimeric FECH bridges ABCB7 and ABCB10 homodimers; this complex may be required for cellular iron homeostasis, mitochondrial function and heme biosynthesis. Interacts with ABCB7 and ABCB10. The cofactor is [2Fe-2S] cluster.

The protein resides in the mitochondrion inner membrane. The catalysed reaction is heme b + 2 H(+) = protoporphyrin IX + Fe(2+). The protein operates within porphyrin-containing compound metabolism; protoheme biosynthesis; protoheme from protoporphyrin-IX: step 1/1. Inhibited by nitric oxide (NO). The 2Fe-2S cluster could act as a NO sensor. Functionally, catalyzes the ferrous insertion into protoporphyrin IX and participates in the terminal step in the heme biosynthetic pathway. The protein is Ferrochelatase, mitochondrial of Homo sapiens (Human).